The primary structure comprises 517 residues: Cytochrome P450 monooxygenase cdmJ (517 aa).

The chain crosses the membrane as a helical span at residues 15 to 35; sequence YMWSLTLFALCLSAILMFPFL. N-linked (GlcNAc...) asparagine glycosylation occurs at Asn-404. Cys-451 is a heme binding site.

Belongs to the cytochrome P450 family. Requires heme as cofactor.

It localises to the membrane. It catalyses the reaction 3-hydroxypentacecilide A + NADPH + O2 + H(+) = chrodrimanin F + NADP(+) + H2O. It carries out the reaction chrodrimanin C + NADPH + O2 + H(+) = chrodrimanin H + NADP(+) + H2O. The catalysed reaction is verruculide A + NADPH + O2 + H(+) = chrodrimanin E + NADP(+) + H2O. The enzyme catalyses chrodrimanin T + NADPH + O2 + H(+) = chrodrimanin A + NADP(+) + H2O. It participates in secondary metabolite biosynthesis; terpenoid biosynthesis. Cytochrome P450 monooxygenase; part of the gene cluster that mediates the biosynthesis of chrodrimanin B, a meroterpenoid that acts as a potent blocker of insect GABA-gated chloride channels. The first step of the pathway is the biosynthesis of 6-hydroxymellein by the polyketide synthase cdmE. The prenyltransferase cdmH acts as a 6-hydroxymellein 5-farnesyltransferase and produces the hydrophobic metabolite verruculide C. The FAD-dependent monooxygenase cdmI further converts verruculide C into verruculide B. The terpene cyclase cdmG then produced the pentacyclic molecule 3-hydroxypentacecilide A, the backbone structure of chrodrimanin B, via folding the farnesyl moiety of the substrate into the chair-boat conformation. The short-chain dehydrogenase/reductase cdmF functions as the 3-OH dehydrogenase that oxidizes the C-3 hydroxyl group of 3-hydroxypentacecilide A and produces chrodrimanin C, the dehydrogenated product of 3-hydroxypentacecilide A. The cytochrome P450 monooxygenase cdmJ then accepts both 3-hydroxypentacecilide A and chrodrimanin C and functions as a C-7-beta-hydroxylase to produce respectively chrodrimanin H and chrodrimanin F. The dioxygenase cdmA accepts chrodrimanin H to afford chrodrimanin E, which is further transformed to chrodrimanin A by the dioxygenase cdmD. CdmA can also accept chrodrimanin C as substrate to convert it into verruculide A, which is further converted into chrodrimanin T by cdmD. The last step of the biosynthesis is proposed to be performed by the acetyltransferase cdmC which acetylates chrodrimanin A to yield chrodrimanin B. The pathway may also lead to the production of additional shunt products, including chrodrimanins T and U. The sequence is that of Cytochrome P450 monooxygenase cdmJ from Talaromyces verruculosus (Penicillium verruculosum).